The sequence spans 170 residues: RNA pyrophosphohydrolase (170 aa).

In terms of domain architecture, Nudix hydrolase spans 6–150; sequence GFRPNVGIIL…KRDVYRRALR (145 aa). The short motif at 39–60 is the Nudix box element; sequence GGINAHESPEQALYRELHEEVG.

Belongs to the Nudix hydrolase family. RppH subfamily. It depends on a divalent metal cation as a cofactor.

Functionally, accelerates the degradation of transcripts by removing pyrophosphate from the 5'-end of triphosphorylated RNA, leading to a more labile monophosphorylated state that can stimulate subsequent ribonuclease cleavage. The protein is RNA pyrophosphohydrolase of Cellvibrio japonicus (strain Ueda107) (Pseudomonas fluorescens subsp. cellulosa).